Reading from the N-terminus, the 91-residue chain is Elongation factor 1-beta (91 aa).

As to quaternary structure, homodimer.

Promotes the exchange of GDP for GTP in EF-1-alpha/GDP, thus allowing the regeneration of EF-1-alpha/GTP that could then be used to form the ternary complex EF-1-alpha/GTP/AAtRNA. In Saccharolobus solfataricus (strain ATCC 35092 / DSM 1617 / JCM 11322 / P2) (Sulfolobus solfataricus), this protein is Elongation factor 1-beta (ef1b).